We begin with the raw amino-acid sequence, 471 residues long: Casein kinase 1-like protein 9 (471 aa).

Residues 9–278 (FKLGRKIGSG…LKRLFRDLFI (270 aa)) enclose the Protein kinase domain. ATP contacts are provided by residues 15–23 (IGSGSFGEL) and Lys38. The active-site Proton acceptor is Asp128. The tract at residues 300 to 471 (SSSGSSSRTR…RSLELLTLRK (172 aa)) is disordered. Residues 325–339 (EKQERIAGKETRENR) are compositionally biased toward basic and acidic residues. Positions 385-430 (SSRYGSSSRRAIPSSSRPSSAGGPSDSRSSSRLVTSTGGVGTVSNR) are enriched in low complexity. Positions 431–449 (ASTSQRIQAGNESRTSSFS) are enriched in polar residues. The span at 454–464 (NTREDPLRRSL) shows a compositional bias: basic and acidic residues.

It belongs to the protein kinase superfamily. CK1 Ser/Thr protein kinase family. Casein kinase I subfamily. Monomer. In terms of processing, autophosphorylated on serine, threonine and tyrosine residues. Expressed in leaves, stems and flowers.

Its subcellular location is the cytoplasm. It is found in the nucleus. It carries out the reaction L-seryl-[protein] + ATP = O-phospho-L-seryl-[protein] + ADP + H(+). It catalyses the reaction L-threonyl-[protein] + ATP = O-phospho-L-threonyl-[protein] + ADP + H(+). Casein kinases are operationally defined by their preferential utilization of acidic proteins such as caseins as substrates. Can phosphorylate casein on serine and threonine residues, and poly(Glu,Tyr) in vitro. This is Casein kinase 1-like protein 9 from Arabidopsis thaliana (Mouse-ear cress).